Consider the following 359-residue polypeptide: Mannonate dehydratase (359 aa).

Belongs to the mannonate dehydratase family. Fe(2+) is required as a cofactor. Mn(2+) serves as cofactor.

The catalysed reaction is D-mannonate = 2-dehydro-3-deoxy-D-gluconate + H2O. It participates in carbohydrate metabolism; pentose and glucuronate interconversion. Its function is as follows. Catalyzes the dehydration of D-mannonate. This chain is Mannonate dehydratase (uxuA), found in Bacillus subtilis (strain 168).